The following is a 274-amino-acid chain: Pyrroline-5-carboxylate reductase 3 (274 aa).

Belongs to the pyrroline-5-carboxylate reductase family. Homodecamer; composed of 5 homodimers.

Its subcellular location is the cytoplasm. It catalyses the reaction L-proline + NADP(+) = (S)-1-pyrroline-5-carboxylate + NADPH + 2 H(+). The catalysed reaction is L-proline + NAD(+) = (S)-1-pyrroline-5-carboxylate + NADH + 2 H(+). It participates in amino-acid biosynthesis; L-proline biosynthesis; L-proline from L-glutamate 5-semialdehyde: step 1/1. Functionally, oxidoreductase that catalyzes the last step in proline biosynthesis, which corresponds to the reduction of pyrroline-5-carboxylate (P5C) to L-proline using NAD(P)H. Proline is synthesized from either glutamate or ornithine; both are converted to P5C, and then to proline via pyrroline-5-carboxylate reductases (PYCRs). PYCR3 is exclusively linked to the biosynthesis of proline from ornithine. In Xenopus laevis (African clawed frog), this protein is Pyrroline-5-carboxylate reductase 3.